A 166-amino-acid chain; its full sequence is Apoptosis regulator M11L (166 aa).

The helical transmembrane segment at 138 to 160 (SGGCKISVYLTAAVVGFVAYGIL) threads the bilayer.

Interacts with host BAX; this interaction inhibits apoptosis activation. Interacts with host BAK1.

The protein resides in the host mitochondrion. The protein localises to the host membrane. Its function is as follows. Plays a role in the inhibition of mitochondria-mediated apoptosis by blocking the activation of mitochondria-tranlocalized BAX thereby maintaining pro-apoptotic BAX in an inactive conformation. Also inhibits apoptosis in a BAX-independent manner by interacting with and inhibiting host BAK1. This chain is Apoptosis regulator M11L (m011L), found in Myxoma virus (strain Lausanne) (MYXV).